A 416-amino-acid polypeptide reads, in one-letter code: MLKRDMNIADYDAELFAAIQEETARQEEHIELIASENYTSPRVMEAQGSQLTNKYAEGYPGKRYYGGCEFVDKAEQLAIDRACQLFGAEYANVQPHSGSQANNAVYMALLNPGDTVLGMSLAHGGHLTHGSPVNFSGKLYNIIPYGIDETGQIDYEEMEALALEHKPKMIIGGFSAYSQVVDWKRMREIADKVGAYFFVDMAHVAGLIAAGVYPNPVPHAHVVTTTTHKTLAGPRGGLILSNDGEALYKKLNSAVFPGGQGGPLMHVIAAKAVAFKEAMEPEFKVYQACVVENAKAMVGEFLERGYKIVSGSTENHLFLVDLIDKGITGKEADAALGAANITVNKNSVPNDPRSPFVTSGIRIGTPSITRRGFTVEDTKQLAGWICDVLDNTDKPEVIEATKAKVLEICKRLPVYA.

(6S)-5,6,7,8-tetrahydrofolate contacts are provided by residues Leu-121 and 125 to 127 (GHL). Lys-229 is subject to N6-(pyridoxal phosphate)lysine. (6S)-5,6,7,8-tetrahydrofolate is bound by residues Glu-245 and 354 to 356 (SPF).

Belongs to the SHMT family. In terms of assembly, homodimer. Requires pyridoxal 5'-phosphate as cofactor.

Its subcellular location is the cytoplasm. The enzyme catalyses (6R)-5,10-methylene-5,6,7,8-tetrahydrofolate + glycine + H2O = (6S)-5,6,7,8-tetrahydrofolate + L-serine. The protein operates within one-carbon metabolism; tetrahydrofolate interconversion. It functions in the pathway amino-acid biosynthesis; glycine biosynthesis; glycine from L-serine: step 1/1. In terms of biological role, catalyzes the reversible interconversion of serine and glycine with tetrahydrofolate (THF) serving as the one-carbon carrier. This reaction serves as the major source of one-carbon groups required for the biosynthesis of purines, thymidylate, methionine, and other important biomolecules. Also exhibits THF-independent aldolase activity toward beta-hydroxyamino acids, producing glycine and aldehydes, via a retro-aldol mechanism. The protein is Serine hydroxymethyltransferase 1 of Photobacterium profundum (strain SS9).